Reading from the N-terminus, the 465-residue chain is Glutamate--tRNA ligase (465 aa).

A 'HIGH' region motif is present at residues 8 to 18 (PSPTGYLHIGG). The 'KMSKS' region signature appears at 236–240 (RLSKR). Position 239 (K239) interacts with ATP.

It belongs to the class-I aminoacyl-tRNA synthetase family. Glutamate--tRNA ligase type 1 subfamily. Monomer.

It localises to the cytoplasm. The enzyme catalyses tRNA(Glu) + L-glutamate + ATP = L-glutamyl-tRNA(Glu) + AMP + diphosphate. Functionally, catalyzes the attachment of glutamate to tRNA(Glu) in a two-step reaction: glutamate is first activated by ATP to form Glu-AMP and then transferred to the acceptor end of tRNA(Glu). This is Glutamate--tRNA ligase from Nitrosospira multiformis (strain ATCC 25196 / NCIMB 11849 / C 71).